A 156-amino-acid chain; its full sequence is Small ribosomal subunit protein uS7 (156 aa).

It belongs to the universal ribosomal protein uS7 family. As to quaternary structure, part of the 30S ribosomal subunit. Contacts proteins S9 and S11.

In terms of biological role, one of the primary rRNA binding proteins, it binds directly to 16S rRNA where it nucleates assembly of the head domain of the 30S subunit. Is located at the subunit interface close to the decoding center, probably blocks exit of the E-site tRNA. The sequence is that of Small ribosomal subunit protein uS7 from Teredinibacter turnerae (strain ATCC 39867 / T7901).